Here is a 287-residue protein sequence, read N- to C-terminus: rRNA adenine N-6-methyltransferase (287 aa).

Basic residues predominate over residues 1 to 13 (MKKKNHKYRGKKL). The tract at residues 1–21 (MKKKNHKYRGKKLNRGESPNF) is disordered. The S-adenosyl-L-methionine site is built by His25, Met27, Gly52, Glu73, Asp98, and Asn114.

Belongs to the class I-like SAM-binding methyltransferase superfamily. rRNA adenine N(6)-methyltransferase family. As to quaternary structure, homodimer.

In terms of biological role, involved in erythromycin resistance. This chain is rRNA adenine N-6-methyltransferase (ermJ), found in Bacillus anthracis.